The chain runs to 390 residues: Tumor susceptibility gene 101 protein (390 aa).

Residue Ala2 is modified to N-acetylalanine. One can recognise a UEV domain in the interval 2–145 (AVSESQLKKM…GDEPPVFSRP (144 aa)). Residues 158–162 (PPNTS) are interaction with CEP55. Positions 198–214 (ATTSSQYPSQPPVTTVG) are enriched in polar residues. The segment at 198-220 (ATTSSQYPSQPPVTTVGPSRDGT) is disordered. Residue Thr220 is modified to Phosphothreonine. A coiled-coil region spans residues 235–316 (SDKLRWRMKE…NQSENNDIDE (82 aa)). The short motif at 320-323 (PTAP) is the PTAP motif element. Residues 322–390 (APLYKQILNL…RKTAGLSDLY (69 aa)) form the SB domain.

The protein belongs to the ubiquitin-conjugating enzyme family. UEV subfamily. In terms of assembly, component of the ESCRT-I complex (endosomal sorting complex required for transport I) which consists of TSG101, VPS28, a VPS37 protein (VPS37A to -D) and MVB12A or MVB12B in a 1:1:1:1 stoichiometry. Interacts with VPS37A, VPS37B and VPS37C. Interacts with DMAP1. Interacts with ubiquitin. Interacts with stathmin, GMCL and AATF. Component of an ESCRT-I complex (endosomal sorting complex required for transport I) which consists of TSG101, VPS28, VPS37A and UBAP1 in a 1:1:1:1 stoichiometry. Interacts with HGS; the interaction mediates the association with the ESCRT-0 complex. Interacts with GGA1 and GGA3. Interacts (via UEV domain) with PDCD6IP/AIP1. Interacts with VPS28, SNF8 and VPS36. Self-associates. Interacts with MVB12A; the association appears to be mediated by the TSG101-VPS37 binary subcomplex. Interacts with VPS37D. Interacts with LRSAM1. Interacts with CEP55; the interaction is required for cytokinesis but not for viral budding. Interacts with PDCD6. Interacts with LITAF. Interacts with MGRN1. Interacts with ARRDC1; recruits TSG101 to the plasma membrane. As to quaternary structure, (Microbial infection) Interacts with HIV-1 p6. (Microbial infection) Interacts with human spumavirus Gag. In terms of assembly, (Microbial infection) Interacts with HTLV-1 Gag. As to quaternary structure, (Microbial infection) Interacts with Ebola virus VP40. (Microbial infection) Interacts with EIAV p9; the interaction has been shown in vitro. In terms of assembly, (Microbial infection) Interacts with Lassa virus protein Z. As to quaternary structure, (Microbial infection) Interacts with hepatitis E virus protein ORF3. In terms of processing, monoubiquitinated at multiple sites by LRSAM1 and by MGRN1. Ubiquitination inactivates it, possibly by regulating its shuttling between an active membrane-bound protein and an inactive soluble form. Ubiquitination by MGRN1 requires the presence of UBE2D1. As to expression, heart, brain, placenta, lung, liver, skeletal, kidney and pancreas.

The protein localises to the cytoplasm. It localises to the early endosome membrane. The protein resides in the late endosome membrane. Its subcellular location is the cytoskeleton. It is found in the microtubule organizing center. The protein localises to the centrosome. It localises to the midbody. The protein resides in the midbody ring. Its subcellular location is the nucleus. Functionally, component of the ESCRT-I complex, a regulator of vesicular trafficking process. Binds to ubiquitinated cargo proteins and is required for the sorting of endocytic ubiquitinated cargos into multivesicular bodies (MVBs). Mediates the association between the ESCRT-0 and ESCRT-I complex. Required for completion of cytokinesis; the function requires CEP55. May be involved in cell growth and differentiation. Acts as a negative growth regulator. Involved in the budding of many viruses through an interaction with viral proteins that contain a late-budding motif P-[ST]-A-P. This interaction is essential for viral particle budding of numerous retroviruses. Required for the exosomal release of SDCBP, CD63 and syndecan. It may also play a role in the extracellular release of microvesicles that differ from the exosomes. This Homo sapiens (Human) protein is Tumor susceptibility gene 101 protein (TSG101).